The sequence spans 282 residues: Formamidopyrimidine-DNA glycosylase (282 aa).

Residue Pro2 is the Schiff-base intermediate with DNA of the active site. Glu3 acts as the Proton donor in catalysis. Lys58 acts as the Proton donor; for beta-elimination activity in catalysis. The DNA site is built by His96, Arg115, and Lys152. The FPG-type zinc-finger motif lies at 238–272 (HVYGRGGQPCERCGEEILKTVLGGRGTHYCPSCQN). Arg262 functions as the Proton donor; for delta-elimination activity in the catalytic mechanism.

This sequence belongs to the FPG family. Monomer. Zn(2+) serves as cofactor.

It carries out the reaction Hydrolysis of DNA containing ring-opened 7-methylguanine residues, releasing 2,6-diamino-4-hydroxy-5-(N-methyl)formamidopyrimidine.. The catalysed reaction is 2'-deoxyribonucleotide-(2'-deoxyribose 5'-phosphate)-2'-deoxyribonucleotide-DNA = a 3'-end 2'-deoxyribonucleotide-(2,3-dehydro-2,3-deoxyribose 5'-phosphate)-DNA + a 5'-end 5'-phospho-2'-deoxyribonucleoside-DNA + H(+). Functionally, involved in base excision repair of DNA damaged by oxidation or by mutagenic agents. Acts as a DNA glycosylase that recognizes and removes damaged bases. Has a preference for oxidized purines, such as 7,8-dihydro-8-oxoguanine (8-oxoG). Has AP (apurinic/apyrimidinic) lyase activity and introduces nicks in the DNA strand. Cleaves the DNA backbone by beta-delta elimination to generate a single-strand break at the site of the removed base with both 3'- and 5'-phosphates. This Corynebacterium aurimucosum (strain ATCC 700975 / DSM 44827 / CIP 107346 / CN-1) (Corynebacterium nigricans) protein is Formamidopyrimidine-DNA glycosylase.